The sequence spans 357 residues: Protein RecA (357 aa).

Residue Gly73–Thr80 participates in ATP binding.

It belongs to the RecA family.

The protein localises to the cytoplasm. Can catalyze the hydrolysis of ATP in the presence of single-stranded DNA, the ATP-dependent uptake of single-stranded DNA by duplex DNA, and the ATP-dependent hybridization of homologous single-stranded DNAs. It interacts with LexA causing its activation and leading to its autocatalytic cleavage. This Nitratidesulfovibrio vulgaris (strain ATCC 29579 / DSM 644 / CCUG 34227 / NCIMB 8303 / VKM B-1760 / Hildenborough) (Desulfovibrio vulgaris) protein is Protein RecA.